The chain runs to 1172 residues: Protein diaphanous homolog 3 (1172 aa).

Residues 1 to 15 (MEKHRARALGRDSKA) are compositionally biased toward basic and acidic residues. The interval 1–36 (MEKHRARALGRDSKASRRKGLPSAPPAGPYELGEKR) is disordered. The Nuclear localization signal motif lies at 16–39 (SRRKGLPSAPPAGPYELGEKRPKL). Threonine 47 is subject to Phosphothreonine. Phosphoserine is present on serine 56. The tract at residues 57–96 (IRIPKGSKKERPPLPQLKTVSGSSDYSSVSSETMENNPKS) is disordered. The segment covering 77–87 (SGSSDYSSVSS) has biased composition (low complexity). Residues 94-456 (PKSLSENEVL…QIVLHRDGID (363 aa)) enclose the GBD/FH3 domain. Serine 155 bears the Phosphoserine mark. The stretch at 493-530 (CKKFEKECTDHQETQAQLQKKEAKINELQAELQAFKSQ) forms a coiled coil. Residues 535-586 (PPGTKIPLQTSAKGEPGPSAFPPAPPALGAGVPPPPPPPPPPPPPLPGMAMP) form a disordered region. The region spanning 541–611 (PLQTSAKGEP…GQNFIPLNLP (71 aa)) is the FH1 domain. The segment covering 553-581 (SAFPPAPPALGAGVPPPPPPPPPPPPPLP) has biased composition (pro residues). One can recognise an FH2 domain in the interval 616–1014 (PKKEFKPEIS…EKRARIAKER (399 aa)). Residues 1037–1067 (DETGVMDSLLEALQSGAAFRDRRKRTPKLKD) enclose the DAD domain. 2 positions are modified to phosphoserine: serine 1073 and serine 1158. A Nuclear export signal motif is present at residues 1163 to 1172 (EALLARLRAL).

Belongs to the formin homology family. Diaphanous subfamily. In terms of processing, ubiquitinated. In terms of tissue distribution, expressed in testis. Present in Sertoli cells (at protein level).

The protein localises to the cytoplasm. It localises to the nucleus. Its function is as follows. Actin nucleation and elongation factor required for the assembly of F-actin structures, such as actin cables and stress fibers. Required for cytokinesis, stress fiber formation and transcriptional activation of the serum response factor. Binds to GTP-bound form of Rho and to profilin: acts in a Rho-dependent manner to recruit profilin to the membrane, where it promotes actin polymerization. DFR proteins couple Rho and Src tyrosine kinase during signaling and the regulation of actin dynamics. Also acts as an actin nucleation and elongation factor in the nucleus by promoting nuclear actin polymerization inside the nucleus to drive serum-dependent SRF-MRTFA activity. The chain is Protein diaphanous homolog 3 from Rattus norvegicus (Rat).